Consider the following 263-residue polypeptide: Lens fiber major intrinsic protein (263 aa).

Topologically, residues 1 to 9 (MWEFRSFSF) are cytoplasmic. Residues 10–29 (WRAVFAEFFGTMFYVFFGLG) traverse the membrane as a helical segment. Residues 30-41 (ASLKWAAGPANV) are Extracellular-facing. The chain crosses the membrane as a helical span at residues 42 to 59 (LVIALAFGLVLATMVQSI). Residues 60–61 (GH) lie on the Cytoplasmic side of the membrane. Residues 62 to 77 (VSGAHINPAVTFAFLI) constitute an intramembrane region (discontinuously helical). The short motif at 68–70 (NPA) is the NPA 1 element. Over 78 to 82 (GSQMS) the chain is Cytoplasmic. A helical transmembrane segment spans residues 83–106 (LFRAIFYIAAQLLGAVAGAAVLYG). Residues 107–127 (VTPAAIRGNLALNTLHPGVSL) lie on the Extracellular side of the membrane. Residues 128 to 148 (GQATTVEIFLTLQFVLCIFAT) traverse the membrane as a helical segment. At 149-156 (YDERRNGR) the chain is on the cytoplasmic side. Residues 157–175 (LGSVSLAIGFSLTLGHLFG) form a helical membrane-spanning segment. At 176–178 (LYY) the chain is on the extracellular side. An intramembrane region (discontinuously helical) is located at residues 179–193 (TGASMNPARSFAPAV). The short motif at 184–186 (NPA) is the NPA 2 element. At 194–200 (LTRNFTN) the chain is on the extracellular side. Residues 201–222 (HWVYWVGPIIGGALGGLVYDFI) traverse the membrane as a helical segment. Topologically, residues 223–263 (LFPRMRGLSERLSILKGARPAEPEGQQEATGEPIELKTQSL) are cytoplasmic. Residues 227–237 (MRGLSERLSIL) are interaction with CALM. The interval 241–263 (RPAEPEGQQEATGEPIELKTQSL) is disordered.

It belongs to the MIP/aquaporin (TC 1.A.8) family. In terms of assembly, homotetramer; each monomer provides an independent water pore. Two homotetramers on opposing membranes can dimerize, forming a cell-cell junction. Interacts with CALM; the calcium-calmodulin/CALM complex interacts with the cytoplasmic domains of two aquaporins, leading to channel closure.

Its subcellular location is the cell membrane. It is found in the cell junction. It catalyses the reaction H2O(in) = H2O(out). With respect to regulation, the water channel activity is inhibited by calcium through calmodulin/CALM. In terms of biological role, aquaporins form homotetrameric transmembrane channels, with each monomer independently mediating water transport across the plasma membrane along its osmotic gradient. Specifically expressed in lens fiber cells, this aquaporin is crucial for maintaining lens water homeostasis and transparency. Beyond water permeability, it also acts as a cell-to-cell adhesion molecule, forming thin junctions between lens fiber cells that are essential for maintaining the ordered structure and transparency of the lens. This Lithobates pipiens (Northern leopard frog) protein is Lens fiber major intrinsic protein.